We begin with the raw amino-acid sequence, 612 residues long: UvrABC system protein C (612 aa).

The 80-residue stretch at 13–92 (AKPGVYIMHD…IKEHRPKYNT (80 aa)) folds into the GIY-YIG domain. The 36-residue stretch at 204–239 (KKIMDRLTTQMQEASEKMEYEEAARYRDLLMSVKQV) folds into the UVR domain.

This sequence belongs to the UvrC family. As to quaternary structure, interacts with UvrB in an incision complex.

Its subcellular location is the cytoplasm. Its function is as follows. The UvrABC repair system catalyzes the recognition and processing of DNA lesions. UvrC both incises the 5' and 3' sides of the lesion. The N-terminal half is responsible for the 3' incision and the C-terminal half is responsible for the 5' incision. This Lachnospira eligens (strain ATCC 27750 / DSM 3376 / VPI C15-48 / C15-B4) (Eubacterium eligens) protein is UvrABC system protein C.